The chain runs to 204 residues: Inactive ribonuclease-like protein 9 (204 aa).

The first 26 residues, 1-26 (MMRTLITTHPLLLLLLLQQLLQPVQL), serve as a signal peptide directing secretion. Disulfide bonds link Cys-97–Cys-152, Cys-115–Cys-167, and Cys-122–Cys-129. N-linked (GlcNAc...) asparagine glycosylation is found at Asn-130 and Asn-142.

It belongs to the pancreatic ribonuclease family.

The protein localises to the secreted. In terms of biological role, does not exhibit any ribonuclease activity. The sequence is that of Inactive ribonuclease-like protein 9 (RNASE9) from Chlorocebus pygerythrus (Vervet monkey).